A 414-amino-acid polypeptide reads, in one-letter code: Probable mannose-1-phosphate guanyltransferase (414 aa).

This sequence belongs to the transferase hexapeptide repeat family.

It is found in the cytoplasm. Its subcellular location is the nucleus. The catalysed reaction is alpha-D-mannose 1-phosphate + GTP + H(+) = GDP-alpha-D-mannose + diphosphate. It functions in the pathway nucleotide-sugar biosynthesis; GDP-alpha-D-mannose biosynthesis; GDP-alpha-D-mannose from alpha-D-mannose 1-phosphate (GTP route): step 1/1. In terms of biological role, involved in cell wall synthesis where it is required for glycosylation. The chain is Probable mannose-1-phosphate guanyltransferase from Schizosaccharomyces pombe (strain 972 / ATCC 24843) (Fission yeast).